The primary structure comprises 220 residues: MNIPPYRTRIKFCGMTRVGDVRLASELGVDAVGLIFASGSSRLLTVSAACAIRRTVAPMVDVVALFQNNSADEIHTVVRTVRPTLLQFHGKEEDAFCRTFNVPYLKAIPMAGAEAKRICTRTLYLKYPNAAGFIFDSHLKGGTGQTFDWSRLPIDLHHPFLLAGGITPENVFDAIAATVPWGVDVSSGIELQPGIKDGDKMRQFVEEVRRADGRRLLGVP.

It belongs to the TrpF family.

The catalysed reaction is N-(5-phospho-beta-D-ribosyl)anthranilate = 1-(2-carboxyphenylamino)-1-deoxy-D-ribulose 5-phosphate. It participates in amino-acid biosynthesis; L-tryptophan biosynthesis; L-tryptophan from chorismate: step 3/5. The protein is N-(5'-phosphoribosyl)anthranilate isomerase of Xylella fastidiosa (strain M23).